The following is a 577-amino-acid chain: MNIQALLSEKVRQAMIAAGAPADCEPQVRQSAKVQFGDYQANGMMAVAKKLGMAPRQLAEQVLTHLDLNGIASKVEIAGPGFINIFLDPAFLAEHVQQALASDRLGVATPEKQTIVVDYSAPNVAKEMHVGHLRSTIIGDAAVRTLEFLGHKVIRANHVGDWGTQFGMLIAWLEKQQQENAGEMELADLEGFYRDAKKHYDEDEEFAERARNYVVKLQSGDEYFREMWRKLVDITMTQNQITYDRLNVTLTRDDVMGESLYNPMLPGIVADLKAKGLAVESEGASVVFLDEFKNKEGEPMGVIIQKKDGGYLYTTTDIACAKYRYETLHADRVLYYIDSRQHQHLMQAWAIVRKAGYVPESVPLEHHMFGMMLGKDGKPFKTRAGGTVKLADLLDEALERARRLVAEKNPDMPADELEKLANAVGIGAVKYADLSKNRTTDYIFDWDNMLAFEGNTAPYMQYAYTRVLSVFRKAEINEEQLAAAPVIIREDREAQLAARLLQFEETLTVVAREGTPHVMCAYLYDLAGLFSGFYEHCPILSAESEEVRNSRLKLAQLTAKTLKLGLDTLGIETVERM.

The 'HIGH' region motif lies at 122–132 (PNVAKEMHVGH).

It belongs to the class-I aminoacyl-tRNA synthetase family. Monomer.

The protein localises to the cytoplasm. It catalyses the reaction tRNA(Arg) + L-arginine + ATP = L-arginyl-tRNA(Arg) + AMP + diphosphate. This Escherichia coli O127:H6 (strain E2348/69 / EPEC) protein is Arginine--tRNA ligase.